We begin with the raw amino-acid sequence, 765 residues long: Zinc finger and BTB domain-containing protein 49 (765 aa).

The 67-residue stretch at 25-91 (CDCMLVVKGV…MYTSHLDLNQ (67 aa)) folds into the BTB domain. Disordered stretches follow at residues 165-203 (QQNK…GSCT) and 275-294 (NFLA…DATC). 7 consecutive C2H2-type zinc fingers follow at residues 395–417 (YACE…KRSH), 423–445 (FECN…LRRH), 451–473 (YICE…IIIH), 479–501 (HLCD…KKTH), 507–529 (FTCD…RIRH), 535–557 (YSCS…VRTH), and 563–585 (YTCE…KKMH).

It belongs to the krueppel C2H2-type zinc-finger protein family. In terms of assembly, isoform 1 interacts with EP300 and KAT5/Tip60. The interaction with EP300 is direct and leads to synergistic induction of CDKN1A. On the CDKN1A promoter, forms a complex with ZBTB17/Miz-1; this interaction leads to additive CDKN1A transactivation. Isoform 3 also interacts with ZBTB17; this interaction may block ZBTB17 repressor activity. In terms of tissue distribution, highly expressed in normal epidermis and in other epithelial tissues, including in colon and lung. Tends to be down-regulated in colon, lung and skin cancer tissues.

Its subcellular location is the cytoplasm. It is found in the nucleus. In terms of biological role, transcription factor. Inhibits cell proliferation by activating either CDKN1A/p21 transcription or RB1 transcription. Its function is as follows. Binds CDKN1A promoter and activates its transcription; this activity is further potentiated in the presence of EP300 (synergistic) and ZBTB17/Miz-1 (additive). Activates RB1 transcription most probably by antagonizing ZBTB17 repression of RB1. Does not bind directly RB1 promoter. The protein is Zinc finger and BTB domain-containing protein 49 (ZBTB49) of Homo sapiens (Human).